Reading from the N-terminus, the 444-residue chain is Citrate-proton symporter (444 aa).

Residues 1 to 41 (MPTARCSMRASSTAPVRMMATAGGARIGAILRVTSGNFLEQ) are Cytoplasmic-facing. Residues 42 to 62 (FDFFLFGFYATYIAHTFFPAS) traverse the membrane as a helical segment. At 63 to 72 (SEFASLMMTF) the chain is on the periplasmic side. A helical transmembrane segment spans residues 73-93 (AVFGAGFLMRPIGAIVLGAYI). At 94 to 114 (DKVGRRKGLIVTLSIMATGTF) the chain is on the cytoplasmic side. Residues 115-135 (LIVLIPSYQTIGLWAPLLVLI) traverse the membrane as a helical segment. Over 136–137 (GR) the chain is Periplasmic. The helical transmembrane segment at 138–158 (LLQGFSAGAELGGVSVYLAEI) threads the bilayer. The Cytoplasmic segment spans residues 159 to 177 (ATPGRKGFYTSWQSGSQQV). The helical transmembrane segment at 178 to 198 (AIMVAAAMGFALNAVLEPSAI) threads the bilayer. Serine 199 is a topological domain (periplasmic). The helical transmembrane segment at 200 to 220 (DWGWRIPFLFGVLIVPFIFIL) threads the bilayer. Residues 221–251 (RRKLEETQEFTARRHHLAMRQVFATLLANWQ) are Cytoplasmic-facing. Residues 252–272 (VVIAGMMMVAMTTTAFYLITV) traverse the membrane as a helical segment. Over 273 to 289 (YAPTFGKKVLMLSASDS) the chain is Periplasmic. Residues 290–310 (LLVTLLVAISNFFWLPVGGAL) traverse the membrane as a helical segment. Topologically, residues 311–318 (SDRFGRRS) are cytoplasmic. Residues 319–339 (VLIAMTLLALATAWPALTMLA) form a helical membrane-spanning segment. A topological domain (periplasmic) is located at residue asparagine 340. The chain crosses the membrane as a helical span at residues 341–361 (APSFLMMLSVLLWLSFIYGMY). At 362 to 379 (NGAMIPALTEIMPAEVRV) the chain is on the cytoplasmic side. The chain crosses the membrane as a helical span at residues 380-400 (AGFSLAYSLATAVFGGFTPVI). The Periplasmic segment spans residues 401–411 (STALIEYTGDK). Residues 412 to 432 (ASPGYWMSFAAICGLLATCYL) form a helical membrane-spanning segment. Over 433–444 (YRRSAVALQTAR) the chain is Cytoplasmic.

The protein belongs to the major facilitator superfamily. Metabolite:H+ Symporter (MHS) family (TC 2.A.1.6) family.

The protein resides in the cell inner membrane. Uptake of citrate across the boundary membrane with the concomitant transport of protons into the cell (symport system). This chain is Citrate-proton symporter (citH), found in Klebsiella pneumoniae.